A 196-amino-acid polypeptide reads, in one-letter code: MSDNIPAQREFDHERAEAAVRELLIAVGEDPDREGLRETPARVARAYAEVFAGLHQDPTEVLHKTFAEEHQELVLVRDIPIYSTCEHHLVPFYGTAHIGYIPGTDGHVTGLSKLARLADMYAKRPQVQERLTSQIADALVEVLHAQSVIVVIECEHLCMAMRGIRKPGATTTTSAVRGGFKKNAASRAEVMSLIRS.

Zn(2+) is bound by residues Cys85, His88, and Cys158.

Belongs to the GTP cyclohydrolase I family. As to quaternary structure, homomer.

It carries out the reaction GTP + H2O = 7,8-dihydroneopterin 3'-triphosphate + formate + H(+). Its pathway is cofactor biosynthesis; 7,8-dihydroneopterin triphosphate biosynthesis; 7,8-dihydroneopterin triphosphate from GTP: step 1/1. In Corynebacterium aurimucosum (strain ATCC 700975 / DSM 44827 / CIP 107346 / CN-1) (Corynebacterium nigricans), this protein is GTP cyclohydrolase 1.